A 279-amino-acid chain; its full sequence is Inorganic pyrophosphatase 2 (279 aa).

Asp12 serves as the catalytic Nucleophile. The Mg(2+) site is built by Asp12 and Asp14. Catalysis depends on Asp14, which acts as the Proton donor. Residues Asp23 and Asp98 each coordinate substrate. Asp182 serves as a coordination point for Mg(2+).

Belongs to the HAD-like hydrolase superfamily. Tetramer. Requires Mg(2+) as cofactor.

The enzyme catalyses diphosphate + H2O = 2 phosphate + H(+). Catalyzes the specific cleavage of pyrophosphate. This is Inorganic pyrophosphatase 2 from Arabidopsis thaliana (Mouse-ear cress).